The chain runs to 240 residues: Biosynthetic peptidoglycan transglycosylase (240 aa).

The chain crosses the membrane as a helical span at residues 16–36 (VLMALLCLFLIYELAMFSMVV).

It belongs to the glycosyltransferase 51 family.

Its subcellular location is the cell inner membrane. It catalyses the reaction [GlcNAc-(1-&gt;4)-Mur2Ac(oyl-L-Ala-gamma-D-Glu-L-Lys-D-Ala-D-Ala)](n)-di-trans,octa-cis-undecaprenyl diphosphate + beta-D-GlcNAc-(1-&gt;4)-Mur2Ac(oyl-L-Ala-gamma-D-Glu-L-Lys-D-Ala-D-Ala)-di-trans,octa-cis-undecaprenyl diphosphate = [GlcNAc-(1-&gt;4)-Mur2Ac(oyl-L-Ala-gamma-D-Glu-L-Lys-D-Ala-D-Ala)](n+1)-di-trans,octa-cis-undecaprenyl diphosphate + di-trans,octa-cis-undecaprenyl diphosphate + H(+). The protein operates within cell wall biogenesis; peptidoglycan biosynthesis. Its function is as follows. Peptidoglycan polymerase that catalyzes glycan chain elongation from lipid-linked precursors. The polypeptide is Biosynthetic peptidoglycan transglycosylase (Bordetella avium (strain 197N)).